We begin with the raw amino-acid sequence, 155 residues long: Putative pre-16S rRNA nuclease (155 aa).

The protein belongs to the YqgF nuclease family.

It is found in the cytoplasm. Its function is as follows. Could be a nuclease involved in processing of the 5'-end of pre-16S rRNA. This chain is Putative pre-16S rRNA nuclease, found in Xylella fastidiosa (strain M12).